We begin with the raw amino-acid sequence, 107 residues long: 2Fe-2S ferredoxin CtmE (107 aa).

Residues V3 to E106 enclose the 2Fe-2S ferredoxin-type domain. Residues C41, C47, C50, and C87 each coordinate [2Fe-2S] cluster.

Belongs to the adrenodoxin/putidaredoxin family. Requires [2Fe-2S] cluster as cofactor.

Its pathway is terpene metabolism; monoterpene degradation. Functionally, involved in the degradation of the cyclic monoterpene limonene. Probably part of an electron transfer system involved in the oxidation of limonene to perillyl alcohol. The polypeptide is 2Fe-2S ferredoxin CtmE (Castellaniella defragrans (strain DSM 12143 / CCUG 39792 / 65Phen) (Alcaligenes defragrans)).